Reading from the N-terminus, the 330-residue chain is Small ribosomal subunit protein uS15m (330 aa).

This sequence belongs to the universal ribosomal protein uS15 family. In terms of assembly, component of the mitochondrial ribosome small subunit (28S) which comprises a 12S rRNA and about 30 distinct proteins.

It is found in the mitochondrion. The polypeptide is Small ribosomal subunit protein uS15m (mrps-15) (Caenorhabditis elegans).